The sequence spans 309 residues: Probable manganese-dependent inorganic pyrophosphatase (309 aa).

Residues H9, D13, D15, D75, H97, and D149 each contribute to the Mn(2+) site.

This sequence belongs to the PPase class C family. The cofactor is Mn(2+).

Its subcellular location is the cytoplasm. The enzyme catalyses diphosphate + H2O = 2 phosphate + H(+). In Bacillus cereus (strain B4264), this protein is Probable manganese-dependent inorganic pyrophosphatase.